The primary structure comprises 212 residues: ATP phosphoribosyltransferase (212 aa).

The protein belongs to the ATP phosphoribosyltransferase family. Short subfamily. As to quaternary structure, heteromultimer composed of HisG and HisZ subunits.

It localises to the cytoplasm. It catalyses the reaction 1-(5-phospho-beta-D-ribosyl)-ATP + diphosphate = 5-phospho-alpha-D-ribose 1-diphosphate + ATP. The protein operates within amino-acid biosynthesis; L-histidine biosynthesis; L-histidine from 5-phospho-alpha-D-ribose 1-diphosphate: step 1/9. Functionally, catalyzes the condensation of ATP and 5-phosphoribose 1-diphosphate to form N'-(5'-phosphoribosyl)-ATP (PR-ATP). Has a crucial role in the pathway because the rate of histidine biosynthesis seems to be controlled primarily by regulation of HisG enzymatic activity. This Clostridium novyi (strain NT) protein is ATP phosphoribosyltransferase.